The following is a 423-amino-acid chain: GTPase ERA-like, chloroplastic (423 aa).

Residues 1-60 (MELGLALRLVAPPPRLPCRALQPPPMPCFSPCAARRSRIRSSRLERRVGVVVSGGSMASL) constitute a chloroplast transit peptide. In terms of domain architecture, Era-type G spans 124–294 (RSGYVAVLGK…KEWILSKLPL (171 aa)). Residues 132-139 (GKPNVGKS) are G1. 132 to 139 (GKPNVGKS) is a binding site for GTP. The G2 stretch occupies residues 158–162 (QTTRH). The tract at residues 179–182 (DTPG) is G3. GTP is bound by residues 179 to 183 (DTPGV) and 244 to 247 (NKKD). A G4 region spans residues 244-247 (NKKD). The G5 stretch occupies residues 273-275 (ISA). Positions 325–402 (YRQEIPYACQ…YLEIMVKVKE (78 aa)) constitute a KH type-2 domain.

Belongs to the TRAFAC class TrmE-Era-EngA-EngB-Septin-like GTPase superfamily. Era GTPase family.

It is found in the plastid. Its subcellular location is the chloroplast stroma. The protein localises to the chloroplast nucleoid. Functionally, nuclear genome-encoded probable GTPase involved in ribosome biogenesis in chloroplasts. Plays a role in 16S rRNA maturation in plastids and may contribute to the assembly of the small (30S) ribosomal subunit. This chain is GTPase ERA-like, chloroplastic, found in Oryza sativa subsp. japonica (Rice).